We begin with the raw amino-acid sequence, 729 residues long: E3 ubiquitin-protein ligase Trim36 (729 aa).

The segment at cysteine 33 to arginine 84 adopts an RING-type; degenerate zinc-finger fold. B box-type zinc fingers lie at residues alanine 154–valine 192 and proline 207–methionine 249. Zn(2+)-binding residues include cysteine 212, histidine 215, cysteine 235, and histidine 241. Residues glutamate 271–histidine 302 adopt a coiled-coil conformation. Residues leucine 356–phenylalanine 413 enclose the COS domain. Residues glycine 416–alanine 511 enclose the Fibronectin type-III domain. Positions proline 509–leucine 723 constitute a B30.2/SPRY domain. A disordered region spans residues arginine 606–alanine 626. A compositionally biased stretch (basic and acidic residues) spans tyrosine 613–glycine 622.

The protein belongs to the TRIM/RBCC family. In terms of assembly, interacts with CENPH. In terms of tissue distribution, expressed in testis. Strongly expressed in the neural tube region in 14.5 dpc embryos.

It localises to the cytoplasm. The protein localises to the cytoplasmic vesicle. It is found in the secretory vesicle. The protein resides in the acrosome. Its subcellular location is the cytoskeleton. It catalyses the reaction S-ubiquitinyl-[E2 ubiquitin-conjugating enzyme]-L-cysteine + [acceptor protein]-L-lysine = [E2 ubiquitin-conjugating enzyme]-L-cysteine + N(6)-ubiquitinyl-[acceptor protein]-L-lysine.. E3 ubiquitin-protein ligase which mediates ubiquitination and subsequent proteasomal degradation of target proteins. Involved in chromosome segregation and cell cycle regulation. May play a role in the acrosome reaction and fertilization. The polypeptide is E3 ubiquitin-protein ligase Trim36 (Trim36) (Mus musculus (Mouse)).